Here is an 88-residue protein sequence, read N- to C-terminus: Large ribosomal subunit protein bL27 (88 aa).

A disordered region spans residues 1-24 (MAHKKGTGSTRNGRDSNSKRLGVK).

This sequence belongs to the bacterial ribosomal protein bL27 family.

In Prochlorococcus marinus (strain MIT 9303), this protein is Large ribosomal subunit protein bL27.